The chain runs to 583 residues: Thiol:disulfide interchange protein DsbD (583 aa).

The N-terminal stretch at 1 to 20 (MLKRFIFLLVGITLTLSAHA) is a signal peptide. Disulfide bonds link cysteine 123/cysteine 128 and cysteine 200/cysteine 322. The next 8 helical transmembrane spans lie at 185–205 (IFWF…LPML), 237–257 (LTYT…QVAL), 261–281 (PVLI…FGLF), 302–322 (GGAF…ASPC), 344–364 (GLAL…ITLF), 375–395 (WLLK…VFLL), 405–425 (PLMW…VIPT), and 433–453 (VRIV…NLVW). Residues 440–583 (TFAVASYPWA…NQFLNWLNQL (144 aa)) enclose the Thioredoxin domain. Cysteine 500 and cysteine 503 are joined by a disulfide.

The protein belongs to the thioredoxin family. DsbD subfamily.

The protein resides in the cell inner membrane. It carries out the reaction [protein]-dithiol + NAD(+) = [protein]-disulfide + NADH + H(+). The catalysed reaction is [protein]-dithiol + NADP(+) = [protein]-disulfide + NADPH + H(+). Required to facilitate the formation of correct disulfide bonds in some periplasmic proteins and for the assembly of the periplasmic c-type cytochromes. Acts by transferring electrons from cytoplasmic thioredoxin to the periplasm. This transfer involves a cascade of disulfide bond formation and reduction steps. The chain is Thiol:disulfide interchange protein DsbD from Actinobacillus pleuropneumoniae serotype 5b (strain L20).